Reading from the N-terminus, the 329-residue chain is Sulfate/thiosulfate import ATP-binding protein CysA (329 aa).

The ABC transporter domain occupies 3-237 (IEIRNVSKNF…PASDFVYHFL (235 aa)). Residue 35–42 (GPSGCGKT) coordinates ATP.

This sequence belongs to the ABC transporter superfamily. Sulfate/tungstate importer (TC 3.A.1.6) family. In terms of assembly, the complex is composed of two ATP-binding proteins (CysA), two transmembrane proteins (CysT and CysW) and a solute-binding protein (CysP).

The protein localises to the cell inner membrane. The enzyme catalyses sulfate(out) + ATP + H2O = sulfate(in) + ADP + phosphate + H(+). It catalyses the reaction thiosulfate(out) + ATP + H2O = thiosulfate(in) + ADP + phosphate + H(+). In terms of biological role, part of the ABC transporter complex CysAWTP involved in sulfate/thiosulfate import. Responsible for energy coupling to the transport system. This is Sulfate/thiosulfate import ATP-binding protein CysA from Pseudomonas aeruginosa (strain ATCC 15692 / DSM 22644 / CIP 104116 / JCM 14847 / LMG 12228 / 1C / PRS 101 / PAO1).